Here is a 162-residue protein sequence, read N- to C-terminus: SCF ubiquitin ligase complex protein SKP1a (162 aa).

N-acetylserine is present on Ser2. The interval 100–162 is interaction with the F-box domain of F-box proteins; sequence ILAANYLDIK…NEWCEDKGGN (63 aa). Pro143 carries the 4-hydroxyproline modification. The O-linked (GlcNAc...) hydroxyproline glycan is linked to Pro143.

The protein belongs to the SKP1 family. In terms of assembly, multiprotein complex (SCF) with cullin and F-box-containing protein. Capable of undergoing aggregation. O-linked glycan consists of linear Gal-Gal-Fuc-Gal-GlcNAc. In terms of processing, fpaA and fpaB seem to be identically glycosylated. Glycosylation is required for nuclear enrichment. Post-translationally, hydroxylated by phyA.

It is found in the cytoplasm. Its subcellular location is the nucleus. The polypeptide is SCF ubiquitin ligase complex protein SKP1a (fpaA) (Dictyostelium discoideum (Social amoeba)).